We begin with the raw amino-acid sequence, 258 residues long: 3-deoxy-manno-octulosonate cytidylyltransferase (258 aa).

It belongs to the KdsB family.

The protein resides in the cytoplasm. It carries out the reaction 3-deoxy-alpha-D-manno-oct-2-ulosonate + CTP = CMP-3-deoxy-beta-D-manno-octulosonate + diphosphate. Its pathway is nucleotide-sugar biosynthesis; CMP-3-deoxy-D-manno-octulosonate biosynthesis; CMP-3-deoxy-D-manno-octulosonate from 3-deoxy-D-manno-octulosonate and CTP: step 1/1. It participates in bacterial outer membrane biogenesis; lipopolysaccharide biosynthesis. Activates KDO (a required 8-carbon sugar) for incorporation into bacterial lipopolysaccharide in Gram-negative bacteria. This is 3-deoxy-manno-octulosonate cytidylyltransferase from Pasteurella multocida (strain Pm70).